The following is a 4599-amino-acid chain: Low-density lipoprotein receptor-related protein 1B (4599 aa).

A signal peptide spans 1 to 20 (MSEFLLALLTLSGLLPIARV). At 25–4444 (ADRDQQLCDP…KSDHISTRSI (4420 aa)) the chain is on the extracellular side. 2 LDL-receptor class A domains span residues 31 to 70 (LCDP…DTCP) and 76 to 114 (KCPL…VHCQ). 12 disulfide bridges follow: C32-C45, C39-C58, C52-C69, C77-C90, C84-C103, C97-C113, C120-C129, C125-C138, C140-C153, C159-C169, C165-C178, and C180-C193. One can recognise an EGF-like 1 domain in the interval 116 to 154 (LLSNCQQLNCQYKCTMVRNSTRCYCEDGFEITEDGRSCK). N134 carries an N-linked (GlcNAc...) asparagine glycan. The region spanning 155-194 (DQDECAVYGTCSQTCRNTHGSYTCSCVEGYLMQPDNRSCK) is the EGF-like 2; calcium-binding domain. N-linked (GlcNAc...) asparagine glycans are attached at residues N190, N220, N313, and N360. LDL-receptor class B repeat units follow at residues 295-337 (RNLY…DPIA), 338-381 (GKLF…DLVN), and 382-425 (KLVY…FEDY). A glycan (N-linked (GlcNAc...) asparagine) is linked at N443. Residues 471–517 (RSHACEVDPYGMPGGCSHICLLSSSYKTRTCRCRTGFNLGSDGRSCK) enclose the EGF-like 3 domain. LDL-receptor class B repeat units lie at residues 568-610 (NYIY…DWIG), 611-656 (NNLY…DPVN), 657-706 (GWMY…DFHT), and 707-750 (NTLY…HGNY). Residues N725 and N758 are each glycosylated (N-linked (GlcNAc...) asparagine). In terms of domain architecture, EGF-like 4 spans 794 to 834 (GDNMCRVNNGGCSTLCLAIPGGRVCACADNQLLDENGTTCT). 6 disulfides stabilise this stretch: C798/C809, C805/C818, C820/C833, C845/C857, C852/C870, and C864/C881. Residue N829 is glycosylated (N-linked (GlcNAc...) asparagine). One can recognise an LDL-receptor class A 3 domain in the interval 844-882 (ICKAGEFRCKNRHCIQARWKCDGDDDCLDGSDEDSVNCF). N-linked (GlcNAc...) asparagine glycosylation occurs at N883. 7 LDL-receptor class A domains span residues 885-923 (SCPD…QTCT), 926-963 (TCQV…ASCE), 966-1003 (TCEP…VGCV), 1005-1043 (SCFD…INCT), 1052-1089 (GCNG…KGCN), 1094-1132 (LCDH…DDCD), and 1135-1174 (LCGP…YLCD). 15 disulfides stabilise this stretch: C886–C898, C893–C911, C905–C922, C927–C939, C934–C952, C946–C962, C967–C980, C975–C993, C987–C1002, C1006–C1018, C1013–C1031, C1025–C1042, C1053–C1066, C1060–C1079, and C1073–C1088. A glycan (N-linked (GlcNAc...) asparagine) is linked at N919. Residue N1041 is glycosylated (N-linked (GlcNAc...) asparagine). Residue N1089 is glycosylated (N-linked (GlcNAc...) asparagine). Cystine bridges form between C1095/C1109, C1103/C1122, C1116/C1131, C1136/C1150, C1143/C1163, and C1157/C1173. N-linked (GlcNAc...) asparagine glycosylation occurs at N1145. EGF-like domains follow at residues 1174–1213 (DECS…KTCE) and 1214–1253 (IVDY…ESCT). Residue N1209 is glycosylated (N-linked (GlcNAc...) asparagine). A glycan (N-linked (GlcNAc...) asparagine) is linked at N1298. LDL-receptor class B repeat units lie at residues 1300–1346 (SLLY…DWIA), 1347–1389 (GNIY…DPRY), 1390–1436 (GILF…DHFE), 1437–1480 (KRIV…LYGS), and 1481–1522 (EVYW…YHPS). 3 N-linked (GlcNAc...) asparagine glycosylation sites follow: N1502, N1549, and N1636. Residues 1527 to 1570 (APNPCAANDGKGPCSHMCLINHNRSAACACPHLMKLSSDKKTCY) form the EGF-like 7 domain. LDL-receptor class B repeat units lie at residues 1618-1660 (ERLY…DWVS), 1661-1704 (RNLY…HPVR), 1705-1744 (GKLY…DYVE), and 1745-1787 (NKLY…TIMD). Residues N1754 and N1816 are each glycosylated (N-linked (GlcNAc...) asparagine). Positions 1834 to 1875 (GSNSCQLNNGGCSQLCLPTSETTRTCMCTVGYYLQKNRMSCQ) constitute an EGF-like 8 domain. 3 disulfides stabilise this stretch: C1838–C1849, C1845–C1859, and C1861–C1874. N-linked (GlcNAc...) asparagine glycosylation is present at N1921. LDL-receptor class B repeat units follow at residues 1922-1964 (DTIY…DWIA), 1965-2007 (GNIY…HPEK), 2008-2051 (GLLF…DYEE), and 2052-2095 (NKLY…FGAY). N1983 carries an N-linked (GlcNAc...) asparagine glycan. N2105 carries an N-linked (GlcNAc...) asparagine glycan. In terms of domain architecture, EGF-like 9 spans 2143–2183 (GTNVCARDNGGCKQLCLYRGNSRRTCACAHGYLAEDGVTCL). 3 disulfides stabilise this stretch: C2147-C2158, C2154-C2168, and C2170-C2182. LDL-receptor class B repeat units lie at residues 2239-2280 (NRIF…HRAW), 2281-2329 (DTLY…DECQ), 2330-2374 (NLMF…DYRA), 2375-2416 (EKLY…VYDN), and 2417-2459 (YIFW…VAND). N-linked (GlcNAc...) asparagine glycosylation is found at N2458, N2488, and N2507. Residues 2464–2504 (ELSPCALLNGGCHDLCLLTPNGRVNCSCRGDRILLEDNRCV) form the EGF-like 10 domain. The 40-residue stretch at 2509 to 2548 (SCNAYSEFECGNGECIDYQLTCDGIPHCKDKSDEKLLYCE) folds into the LDL-receptor class A 11 domain. Intrachain disulfides connect C2510-C2523, C2518-C2536, and C2530-C2547. The N-linked (GlcNAc...) asparagine glycan is linked to N2549. LDL-receptor class A domains follow at residues 2551–2587 (SCRR…LDCK), 2590–2626 (TCAT…KNCN), 2629–2675 (DCTH…LKCP), 2681–2717 (KCEE…FHCD), 2719–2757 (SCSW…SICG), and 2760–2800 (TCAA…AGCA). Intrachain disulfides connect C2552–C2564, C2559–C2577, C2571–C2586, C2591–C2603, C2598–C2616, and C2610–C2625. 2 N-linked (GlcNAc...) asparagine glycosylation sites follow: N2626 and N2647. Intrachain disulfides connect C2630–C2652, C2646–C2665, C2659–C2674, C2682–C2694, C2689–C2707, C2701–C2716, C2720–C2732, C2727–C2745, C2739–C2756, C2761–C2774, C2768–C2787, and C2781–C2799. N2802 is a glycosylation site (N-linked (GlcNAc...) asparagine). LDL-receptor class A domains lie at 2804 to 2841 (TCDE…PQCG), 2844 to 2885 (QCGT…PKCK), and 2890 to 2926 (SCNS…RNCH). 15 disulfide bridges follow: C2805-C2817, C2812-C2830, C2824-C2840, C2845-C2857, C2852-C2871, C2865-C2884, C2891-C2903, C2898-C2916, C2910-C2925, C2930-C2942, C2938-C2951, C2953-C2966, C2972-C2982, C2978-C2991, and C2993-C3007. A glycan (N-linked (GlcNAc...) asparagine) is linked at N2892. The 41-residue stretch at 2927–2967 (INECLSKKVSGCSQDCQDLPVSYKCKCWPGFQLKDDGKTCV) folds into the EGF-like 11 domain. In terms of domain architecture, EGF-like 12; calcium-binding spans 2968–3008 (DIDECSSGFPCSQQCINTYGTYKCLCTDGYEIQPDNPNGCK). N-linked (GlcNAc...) asparagine glycans are attached at residues N3034, N3066, and N3076. LDL-receptor class B repeat units follow at residues 3055–3098 (EFIY…DWIG), 3099–3141 (KNLY…DPQA), 3142–3185 (GYLY…DYVN), 3186–3224 (RRLY…TLFE), and 3225–3268 (DYIY…HSYR). N3164 carries an N-linked (GlcNAc...) asparagine glycan. The EGF-like 13 domain maps to 3273–3314 (SKHLCMINNGGCSHLCLLAPGKTHTCACPTNFYLAADNRTCL). 2 N-linked (GlcNAc...) asparagine glycosylation sites follow: N3310 and N3316. 12 LDL-receptor class A domains span residues 3316 to 3353 (NCTA…DDCP), 3356 to 3392 (RCQP…LNCD), 3395 to 3432 (VCLS…RDCP), 3435 to 3472 (SCSP…ANCD), 3475 to 3511 (TCGP…ENCK), 3514 to 3550 (TCTL…RNCE), 3552 to 3588 (SCSK…KSCE), 3593 to 3629 (TCSS…MDCV), 3631 to 3668 (ECKE…ENCE), 3673 to 3711 (ICRA…DMCV), 3714 to 3752 (LCPS…DHCG), and 3761 to 3797 (PCKK…QGCR). 42 disulfide bridges follow: C3317/C3329, C3324/C3342, C3336/C3352, C3357/C3369, C3364/C3382, C3376/C3391, C3396/C3409, C3403/C3422, C3416/C3431, C3436/C3449, C3443/C3462, C3456/C3471, C3476/C3488, C3483/C3501, C3495/C3510, C3515/C3527, C3522/C3540, C3534/C3549, C3553/C3565, C3560/C3578, C3572/C3587, C3594/C3606, C3601/C3619, C3613/C3628, C3632/C3645, C3639/C3658, C3652/C3667, C3674/C3686, C3681/C3699, C3693/C3710, C3715/C3729, C3723/C3742, C3736/C3751, C3762/C3774, C3769/C3787, C3781/C3796, C3805/C3818, C3812/C3827, C3829/C3842, C3848/C3858, C3854/C3867, and C3869/C3880. A glycan (N-linked (GlcNAc...) asparagine) is linked at N3682. EGF-like domains lie at 3801–3843 (TEYT…RQCE) and 3844–3881 (DLNE…NTCI). 3 N-linked (GlcNAc...) asparagine glycosylation sites follow: N3877, N3894, and N3906. LDL-receptor class B repeat units lie at residues 3933–3980 (DMII…DWVA), 3981–4038 (GNIY…NPKR), 4039–4082 (GMMY…DYFS), and 4083–4127 (ERIY…FEDY). Residue N4017 is glycosylated (N-linked (GlcNAc...) asparagine). EGF-like domains are found at residues 4171 to 4208 (DLPN…GTCN), 4213 to 4249 (LDDS…ERCE), 4249 to 4285 (EVNH…PNCG), 4285 to 4321 (GKTV…DRCQ), 4321 to 4357 (QYYV…PKCE), 4357 to 4392 (EVDK…SSCQ), and 4390 to 4427 (SCQL…TQCE). The N-linked (GlcNAc...) asparagine glycan is linked to N4204. Cystine bridges form between C4217–C4227, C4221–C4237, C4253–C4263, C4257–C4273, C4275–C4284, C4289–C4299, C4293–C4309, C4311–C4320, C4325–C4335, C4329–C4345, and C4347–C4356. N-linked (GlcNAc...) asparagine glycosylation occurs at N4381. 3 cysteine pairs are disulfide-bonded: C4394-C4404, C4398-C4415, and C4417-C4426. The N-linked (GlcNAc...) asparagine glycan is linked to N4420. The chain crosses the membrane as a helical span at residues 4445–4467 (AIIVPLVLLVTLITTLVIGLVLC). Residues 4468 to 4599 (KRKRRTKTIR…IEIGIRETVA (132 aa)) are Cytoplasmic-facing. Short sequence motifs (endocytosis signal) lie at residues 4492 to 4495 (NPSY) and 4559 to 4562 (NPVY).

This sequence belongs to the LDLR family. In terms of assembly, binds LRPAP1, PLAU, PLAT and SERPINE1; binding is followed by internalization and degradation of the ligands. In terms of tissue distribution, expressed in thyroid gland and in salivary gland, as well as in adult and fetal brain.

It is found in the membrane. Its function is as follows. Potential cell surface proteins that bind and internalize ligands in the process of receptor-mediated endocytosis. This is Low-density lipoprotein receptor-related protein 1B (LRP1B) from Homo sapiens (Human).